The sequence spans 214 residues: Probable transaldolase (214 aa).

The active-site Schiff-base intermediate with substrate is the Lys-83.

The protein belongs to the transaldolase family. Type 3B subfamily.

The protein resides in the cytoplasm. It carries out the reaction D-sedoheptulose 7-phosphate + D-glyceraldehyde 3-phosphate = D-erythrose 4-phosphate + beta-D-fructose 6-phosphate. It functions in the pathway carbohydrate degradation; pentose phosphate pathway; D-glyceraldehyde 3-phosphate and beta-D-fructose 6-phosphate from D-ribose 5-phosphate and D-xylulose 5-phosphate (non-oxidative stage): step 2/3. Transaldolase is important for the balance of metabolites in the pentose-phosphate pathway. The polypeptide is Probable transaldolase (Leptospira interrogans serogroup Icterohaemorrhagiae serovar copenhageni (strain Fiocruz L1-130)).